Here is a 469-residue protein sequence, read N- to C-terminus: DNA repair and recombination protein rad22 (469 aa).

A disordered region spans residues 265 to 296 (PAANNHHSEKAGTQINNKDKGSHNSAKPVQRS). The span at 287-296 (HNSAKPVQRS) shows a compositional bias: polar residues. Phosphoserine occurs at positions 296 and 319. A disordered region spans residues 429–469 (LHDSTTSHNKSDLMRTNSDPQSAMRSRENYDATVDKKAKKG). Residues 431–452 (DSTTSHNKSDLMRTNSDPQSAM) are compositionally biased toward polar residues. The span at 453 to 469 (RSRENYDATVDKKAKKG) shows a compositional bias: basic and acidic residues.

Belongs to the RAD52 family. Interacts with rhp51.

It is found in the nucleus. Functionally, active in the repair of DNA damage and in mating-type switching. Probably involved in the repair of DNA double-strands breaks. Has a role in promoting S phase completion. The protein is DNA repair and recombination protein rad22 (rad22) of Schizosaccharomyces pombe (strain 972 / ATCC 24843) (Fission yeast).